Consider the following 1220-residue polypeptide: Plasma membrane calcium-transporting ATPase 1 (1220 aa).

Gly-2 carries the N-acetylglycine modification. Over 2–105 (GDMANNSVVY…KTFLQLVWEA (104 aa)) the chain is Cytoplasmic. Phosphoserine occurs at positions 8 and 17. Residues 106-126 (LQDVTLIILEIAAIVSLGLSF) traverse the membrane as a helical segment. At 127–154 (YQPPEGDNALCGEVSVGEEEGEGETGWI) the chain is on the extracellular side. A helical transmembrane segment spans residues 155 to 175 (EGAAILLSVVCVVLVTAFNDW). Residues 176-366 (SKEKQFRGLQ…KEKSVLQGKL (191 aa)) are Cytoplasmic-facing. Residues 297 to 356 (EEEKKDEKKKEKKNKKQDGAIENRNKAKAQDGEPMEMQPLKSEEGGDGDEKDKKKANLPK) form a disordered region. Composition is skewed to basic and acidic residues over residues 312 to 327 (KQDG…KAQD) and 337 to 356 (KSEE…NLPK). Residue Ser-338 is modified to Phosphoserine. The helical transmembrane segment at 367 to 386 (TKLAVQIGKAGLLMSAITVI) threads the bilayer. The Extracellular portion of the chain corresponds to 387-418 (ILVLYFLIDTFWVQKRPWLAECTPIYIQYFVK). The helical transmembrane segment at 419–439 (FFIIGVTVLVVAVPEGLPLPV) threads the bilayer. Over 440–855 (TISLAYSVNE…RNVYDSISKF (416 aa)) the chain is Cytoplasmic. The 4-aspartylphosphate intermediate role is filled by Asp-475. Asp-475, Thr-477, and Asp-797 together coordinate Mg(2+). A helical transmembrane segment spans residues 856 to 876 (LQFQLTVNVVAVIVAFTGACI). Topologically, residues 877–882 (TQDSPL) are extracellular. A helical membrane pass occupies residues 883 to 903 (KAVQMLWVNLIMDTLASLALA). Residues 904 to 927 (TEPPTESLLLGKPYGRNKPLISRT) lie on the Cytoplasmic side of the membrane. A helical transmembrane segment spans residues 928–948 (MMKNILGHAFYQLVVVFTLLL). Over 949–971 (AGEKFFDIDSGRNAPLHAPPSEH) the chain is Extracellular. The chain crosses the membrane as a helical span at residues 972 to 991 (YTIVFNIFVLMQLFNEINAR). Residues 992-1005 (KIHGERNVFEGIFN) are Cytoplasmic-facing. The helical transmembrane segment at 1006 to 1027 (NAIFCTIVLGTFVVQIIIVQFA) threads the bilayer. Residues 1028–1039 (GKPFSCSELSVE) are Extracellular-facing. Residues 1040 to 1060 (QWLWSIFLGMGTLLWGQLIST) form a helical membrane-spanning segment. The Cytoplasmic portion of the chain corresponds to 1061–1220 (IPTSRLKFQK…SPLHSLETSL (160 aa)). Positions 1100–1117 (LRRWQILWFRGLNRIQTQ) are calmodulin-binding subdomain A. Thr-1116 is subject to Phosphothreonine; by PKC. The segment at 1118–1220 (IRVVNAFRSS…SPLHSLETSL (103 aa)) is required for basolateral membrane targeting. 2 positions are modified to phosphoserine: Ser-1140 and Ser-1155. Positions 1160–1220 (PLIDDTDAED…SPLHSLETSL (61 aa)) are disordered. Residue Thr-1165 is modified to Phosphothreonine. A Phosphoserine; by PKA modification is found at Ser-1177. Residues Ser-1178 and Ser-1182 each carry the phosphoserine modification. Polar residues predominate over residues 1200–1220 (MNKSATSSSPGSPLHSLETSL).

This sequence belongs to the cation transport ATPase (P-type) (TC 3.A.3) family. Type IIB subfamily. As to quaternary structure, monomer. Dimer. Oligomer. Calmodulin binding. Interacts with PDZD11. Interacts with SLC35G1 and STIM1. Interacts with YWHAE; interacts with the monomeric and dimeric forms of the YWHAE but prefer the monomer form; this interaction inhibits calcium-transporting ATPase activity. Interacts with NPTN; this interaction stabilizes ATP2B1 and increases ATPase activity; this interaction controls T cell calcium homeostasis following T cell activation. Interacts with EPB41; regulates small intestinal calcium absorption through regulation of membrane expression of ATP2B1. As to expression, isoform B is ubiquitously expressed and is the most predominant isoform. Isoform C is expressed at much lower levels in all tissues tested, but liver, while isoform A is found only in aorta, brain and stomach.

The protein localises to the cell membrane. It is found in the basolateral cell membrane. The protein resides in the synapse. It localises to the presynaptic cell membrane. Its subcellular location is the cytoplasmic vesicle. The protein localises to the secretory vesicle. It is found in the synaptic vesicle membrane. The catalysed reaction is Ca(2+)(in) + ATP + H2O = Ca(2+)(out) + ADP + phosphate + H(+). Catalyzes the hydrolysis of ATP coupled with the transport of calcium from the cytoplasm to the extracellular space thereby maintaining intracellular calcium homeostasis. Plays a role in blood pressure regulation through regulation of intracellular calcium concentration and nitric oxide production leading to regulation of vascular smooth muscle cells vasoconstriction. Positively regulates bone mineralization through absorption of calcium from the intestine. Plays dual roles in osteoclast differentiation and survival by regulating RANKL-induced calcium oscillations in preosteoclasts and mediating calcium extrusion in mature osteoclasts. Regulates insulin sensitivity through calcium/calmodulin signaling pathway by regulating AKT1 activation and NOS3 activation in endothelial cells. May play a role in synaptic transmission by modulating calcium and proton dynamics at the synaptic vesicles. The polypeptide is Plasma membrane calcium-transporting ATPase 1 (Oryctolagus cuniculus (Rabbit)).